We begin with the raw amino-acid sequence, 716 residues long: Fatty acid oxidation complex subunit alpha (716 aa).

The enoyl-CoA hydratase/isomerase stretch occupies residues 1–188 (MIYQSPTIQV…KVGAIDAVVA (188 aa)). Residue D295 participates in substrate binding. Residues 310-716 (KDIKHAAVLG…SNNGSYYPKA (407 aa)) are 3-hydroxyacyl-CoA dehydrogenase. Residues M323, D342, 399–401 (VVE), K406, and S428 each bind NAD(+). H449 acts as the For 3-hydroxyacyl-CoA dehydrogenase activity in catalysis. N452 is a binding site for NAD(+). Substrate is bound by residues N499 and Y659.

This sequence in the N-terminal section; belongs to the enoyl-CoA hydratase/isomerase family. In the C-terminal section; belongs to the 3-hydroxyacyl-CoA dehydrogenase family. In terms of assembly, heterotetramer of two alpha chains (FadB) and two beta chains (FadA).

It catalyses the reaction a (3S)-3-hydroxyacyl-CoA + NAD(+) = a 3-oxoacyl-CoA + NADH + H(+). The enzyme catalyses a (3S)-3-hydroxyacyl-CoA = a (2E)-enoyl-CoA + H2O. The catalysed reaction is a 4-saturated-(3S)-3-hydroxyacyl-CoA = a (3E)-enoyl-CoA + H2O. It carries out the reaction (3S)-3-hydroxybutanoyl-CoA = (3R)-3-hydroxybutanoyl-CoA. It catalyses the reaction a (3Z)-enoyl-CoA = a 4-saturated (2E)-enoyl-CoA. The enzyme catalyses a (3E)-enoyl-CoA = a 4-saturated (2E)-enoyl-CoA. The protein operates within lipid metabolism; fatty acid beta-oxidation. Its function is as follows. Involved in the aerobic and anaerobic degradation of long-chain fatty acids via beta-oxidation cycle. Catalyzes the formation of 3-oxoacyl-CoA from enoyl-CoA via L-3-hydroxyacyl-CoA. It can also use D-3-hydroxyacyl-CoA and cis-3-enoyl-CoA as substrate. The sequence is that of Fatty acid oxidation complex subunit alpha from Shewanella amazonensis (strain ATCC BAA-1098 / SB2B).